Reading from the N-terminus, the 1459-residue chain is Endogenous retrovirus group K member 7 Pol protein (1459 aa).

The 189-residue stretch at 57 to 245 (LEKGHIEPSF…TPFHYLGMQI (189 aa)) folds into the Reverse transcriptase domain. The LPQG signature appears at 161–164 (LPQG). A YXDD motif is present at residues 195–198 (YIDD). In terms of domain architecture, RNase H type-1 spans 460–590 (LENALTVFTD…ADLLVSSALI (131 aa)). Residues Asp-469, Glu-497, Asp-517, and Asp-582 each coordinate Mg(2+). The segment at 587–628 (SALIKAQELHALTHVNAAGLKNKFDVTWKQAKDIVQHCTQCQ) adopts an Integrase-type zinc-finger fold. Zn(2+) contacts are provided by His-596, His-600, Cys-624, and Cys-627. Residues 642 to 803 (RGLCPNALWQ…TSAEQHLTGK (162 aa)) enclose the Integrase catalytic domain. Residues 811 to 859 (KLIWWKDNKNKTWEIGKVITWGRGFACVSPGENQLPVWIPTRHLKFYNE) constitute a DNA-binding region (integrase-type).

Belongs to the beta type-B retroviral polymerase family. HERV class-II K(HML-2) pol subfamily.

It carries out the reaction DNA(n) + a 2'-deoxyribonucleoside 5'-triphosphate = DNA(n+1) + diphosphate. It catalyses the reaction Endonucleolytic cleavage to 5'-phosphomonoester.. Functionally, early post-infection, the reverse transcriptase converts the viral RNA genome into double-stranded viral DNA. The RNase H domain of the reverse transcriptase performs two functions. It degrades the RNA template and specifically removes the RNA primer from the RNA/DNA hybrid. Following nuclear import, the integrase catalyzes the insertion of the linear, double-stranded viral DNA into the host cell chromosome. Endogenous Pol proteins may have kept, lost or modified their original function during evolution. This is Endogenous retrovirus group K member 7 Pol protein (ERVK-7) from Homo sapiens (Human).